A 258-amino-acid chain; its full sequence is UBX domain-containing protein 2A (258 aa).

The tract at residues 1-152 (MKEVDNLDSI…SATPRIVSKA (152 aa)) is required for interaction with CHRNA3. The required for inhibition of CHRNA3 ubiquitination and translocation of CHRNA3 to the plasma membrane resulting in an increase in acetylcholine-gated nicotinic acetylcholine receptor currents stretch occupies residues 1-165 (MKEVDNLDSI…EVDNKSTLSA (165 aa)). The SEP domain occupies 61 to 125 (QVDVNIKLWK…VEDKKNEVCM (65 aa)). Positions 168–258 (LNNLEPITRI…QKTAEPFRKL (91 aa)) are required for interaction with VCP. The UBX domain occupies 170-247 (NLEPITRIQI…DLQNAVIIQR (78 aa)).

Part of a complex composed of STUB1/CHIP, VCP/p97, CHRNA3, and UBXN2A that modulates the ubiquitination and endoplasmic reticulum-associated degradation (ERAD) of CHRNA3. Within the complex UBXN2A acts as a scaffold protein required for the interaction of CHRNA3 with VCP/p97, this interaction also inhibits CHRNA3 ubiquitination by STUB1/CHIP and subsequently ERAD. Interacts (via SEP domain) with CHRNA3 and interacts (via UBX domain) with VCP/P97; these interactions are required for the interaction of CHRNA3 with the STUB1-VCP-UBXN2A complex. Interacts with HSPA9/MOT-2 (via SBD domain); the interaction inhibits HSPA9/MOT-2 interaction with and degradation of p53, thereby promotes p53 translocation to the nucleus. Interacts with RICTOR. Post-translationally, ubiquitinated.

The protein localises to the golgi apparatus. It is found in the endoplasmic reticulum. The protein resides in the perikaryon. It localises to the cell projection. Its subcellular location is the dendrite. The protein localises to the nucleus. It is found in the cytoplasm. Its function is as follows. Acts to repress the ubiquitination and subsequent endoplasmic reticulum-associated degradation of CHRNA3 by the STUB1-VCP-UBXN2A complex in cortical neurons. Also acts to promote the translocation of CHRNA3 to the plasma membrane and subsequently increases plasma membrane acetylcholine-gated ion-channel activation. Plays a role in the inhibition of STUB1-mediated TP53 degradation, via its interaction with HSPA9 which acts to inhibit TP53 binding to HSPA9. Positively mediates the ubiquitination and proteosomal degradation of RICTOR, may thereby act as a negative regulator of the mTORC2 pathway. The polypeptide is UBX domain-containing protein 2A (Rattus norvegicus (Rat)).